The following is a 305-amino-acid chain: Non-homologous end joining protein Ku (305 aa).

Residues S16–A202 form the Ku domain. The disordered stretch occupies residues G263 to A305.

Belongs to the prokaryotic Ku family. Homodimer. Interacts with LigD.

Functionally, with LigD forms a non-homologous end joining (NHEJ) DNA repair enzyme, which repairs dsDNA breaks with reduced fidelity. Binds linear dsDNA with 5'- and 3'- overhangs but not closed circular dsDNA nor ssDNA. Recruits and stimulates the ligase activity of LigD. The protein is Non-homologous end joining protein Ku of Acidobacterium capsulatum (strain ATCC 51196 / DSM 11244 / BCRC 80197 / JCM 7670 / NBRC 15755 / NCIMB 13165 / 161).